A 293-amino-acid chain; its full sequence is Probable adenylate kinase 1, chloroplastic (293 aa).

The N-terminal 26 residues, 1 to 26, are a transit peptide targeting the mitochondrion; the sequence is MAAVQRLLRASASGGAAAAAAAARRR. An ATP-binding site is contributed by 70 to 75; the sequence is GVGKGT. Residues 90-119 form an NMP region; the sequence is ATGDLVRDELASSGPLSVQLAEIVNQGKLV. Residues Thr91, Arg96, 117–119, 147–150, and Gln154 each bind AMP; these read KLV and GFPR. The segment at 183 to 231 is LID; the sequence is GRRICGQCGKNFNLACIDVKGENGLPPIYMAPLLPPNNCMSKLITRADD. ATP-binding positions include Arg184 and 193–194; that span reads NF. Arg228 and Arg239 together coordinate AMP.

It belongs to the adenylate kinase family.

It is found in the mitochondrion. The enzyme catalyses AMP + ATP = 2 ADP. In terms of biological role, catalyzes the reversible transfer of the terminal phosphate group between ATP and AMP. Plays an important role in cellular energy homeostasis and in adenine nucleotide metabolism. The protein is Probable adenylate kinase 1, chloroplastic of Oryza sativa subsp. japonica (Rice).